Consider the following 179-residue polypeptide: MSRIGNRELKIPVGVEVTIQPNNVIVKSAKGQLEQAIPSVITVAAKEGVVTTTRANDVKHSKQLHGTINSLIQGMLEGVSKGFKKELEINGVGYRAALAGNKLTLSLGYSHPIEYKIPQGITITLPKPTQIIVEGISKKLVGEVAANIRNYRKPEPYKGKGIKYKNKHIIRKEGKSAGK.

Belongs to the universal ribosomal protein uL6 family. In terms of assembly, part of the 50S ribosomal subunit.

Its function is as follows. This protein binds to the 23S rRNA, and is important in its secondary structure. It is located near the subunit interface in the base of the L7/L12 stalk, and near the tRNA binding site of the peptidyltransferase center. The sequence is that of Large ribosomal subunit protein uL6 from Spiroplasma kunkelii.